The chain runs to 760 residues: Semaphorin-4A (760 aa).

A signal peptide spans 1-32 (MALPSLGQDSWSLLRVFFFQLFLLPSLPPASG). Over 33 to 682 (TGGQGPMPRV…MAAQRSYWPH (650 aa)) the chain is Extracellular. Residues 36 to 494 (QGPMPRVKYH…FSGGIWRVPR (459 aa)) form the Sema domain. The cysteines at positions 113 and 124 are disulfide-linked. Asn-120 and Asn-135 each carry an N-linked (GlcNAc...) asparagine glycan. 3 disulfides stabilise this stretch: Cys-142-Cys-151, Cys-269-Cys-379, and Cys-293-Cys-339. Asn-496 is a glycosylation site (N-linked (GlcNAc...) asparagine). In terms of domain architecture, PSI spans 496-547 (NCSVYESCVDCVLARDPHCAWDPESRLCSLLSGSTKPWKQDMERGNPEWVCT). 3 disulfides stabilise this stretch: Cys-497–Cys-514, Cys-506–Cys-523, and Cys-579–Cys-623. Residues 572-630 (NSILELPCPHLSALASYHWSHGRAKISEASATVYNGSLLLLPQDGVGGLYQCVATENGY) form the Ig-like C2-type domain. Asn-606 is a glycosylation site (N-linked (GlcNAc...) asparagine). Residues 683–703 (FLIVTVLLAIVLLGVLTLLLA) form a helical membrane-spanning segment. The Cytoplasmic segment spans residues 704–760 (SPLGALRARGKVQGCGMLPPREKAPLSRDQHLQPSKDHRTSASDVDADNNHLGAEVA). Residues 720–760 (MLPPREKAPLSRDQHLQPSKDHRTSASDVDADNNHLGAEVA) are disordered. Basic and acidic residues predominate over residues 723-744 (PREKAPLSRDQHLQPSKDHRTS).

It belongs to the semaphorin family. In terms of assembly, interacts with PLXNB1, PLXNB2 and PLXNB3. Interacts with PLXND1. Interacts with TIMD2. As to expression, expressed in neurons and glia in the developing hippocampus.

The protein localises to the cell membrane. In terms of biological role, cell surface receptor for PLXNB1, PLXNB2, PLXNB3 and PLXND1 that plays an important role in cell-cell signaling. Regulates glutamatergic and GABAergic synapse development. Promotes the development of inhibitory synapses in a PLXNB1-dependent manner and promotes the development of excitatory synapses in a PLXNB2-dependent manner. Plays a role in priming antigen-specific T-cells, promotes differentiation of Th1 T-helper cells, and thereby contributes to adaptive immunity. Promotes phosphorylation of TIMD2. Inhibits angiogenesis. Promotes axon growth cone collapse. Inhibits axonal extension by providing local signals to specify territories inaccessible for growing axons. This is Semaphorin-4A (Sema4a) from Mus musculus (Mouse).